Here is a 196-residue protein sequence, read N- to C-terminus: Phosphatidyl-N-methylethanolamine N-methyltransferase (196 aa).

Residue M1 is a topological domain, lumenal. An intramembrane region (helical) is located at residues 2-28 (AIFEINNSFLICAVSIALNPLLWNIAA). The Lumenal portion of the chain corresponds to 29-40 (RSEYNHKTLTKL). A helical transmembrane segment spans residues 41–62 (ANGDSKKACYMLAACIFVAGIV). Over 63 to 89 (RDLIYQNALKQQPTLGIFMNPLVQGIA) the chain is Cytoplasmic. The chain crosses the membrane as a helical span at residues 90–110 (KLIFCFGSVLVLSSMYKLGLV). 94–96 (CFG) contacts S-adenosyl-L-methionine. Residues 111–153 (GTYLGDYFGFLLPERVSGFPFNVNDNPMYNGSTLCFLSTALRY) are Lumenal-facing. A helical transmembrane segment spans residues 154 to 174 (GKVAGLLLTLEVFFVYRIALK). The Cytoplasmic segment spans residues 175–196 (FEEPFTAKIYAARDSKQAKKSE). An S-adenosyl-L-methionine-binding site is contributed by 176–177 (EE).

The protein belongs to the class VI-like SAM-binding methyltransferase superfamily. PEMT/PEM2 methyltransferase family.

The protein localises to the endoplasmic reticulum membrane. It is found in the mitochondrion membrane. The enzyme catalyses a 1,2-diacyl-sn-glycero-3-phospho-N-methylethanolamine + S-adenosyl-L-methionine = a 1,2-diacyl-sn-glycero-3-phospho-N,N-dimethylethanolamine + S-adenosyl-L-homocysteine + H(+). It catalyses the reaction a 1,2-diacyl-sn-glycero-3-phospho-N,N-dimethylethanolamine + S-adenosyl-L-methionine = a 1,2-diacyl-sn-glycero-3-phosphocholine + S-adenosyl-L-homocysteine + H(+). The protein operates within phospholipid metabolism; phosphatidylcholine biosynthesis. In terms of biological role, catalyzes the second two steps of the methylation pathway of phosphatidylcholine biosynthesis, the SAM-dependent methylation of phosphatidylmonomethylethanolamine (PMME) to phosphatidyldimethylethanolamine (PDME) and of PDME to phosphatidylcholine (PC). The polypeptide is Phosphatidyl-N-methylethanolamine N-methyltransferase (Schizosaccharomyces pombe (strain 972 / ATCC 24843) (Fission yeast)).